We begin with the raw amino-acid sequence, 252 residues long: TVP38/TMEM64 family membrane protein Mb1528c (252 aa).

Helical transmembrane passes span 32-52, 64-84, 88-108, 149-169, 177-197, and 209-229; these read IVGTVVGITVLVVVALLVPVP, LGAWFPLAFLLVHTVVTVPPF, AFTLAAGLLFGSVVGVFIAVV, WLAILSLRLIPVVPFAAINYA, ILSFAWATLAGLLPGTAAVVI, and LLILVSVCTGALGLTGLVYEI.

It belongs to the TVP38/TMEM64 family.

The protein localises to the cell membrane. The sequence is that of TVP38/TMEM64 family membrane protein Mb1528c from Mycobacterium bovis (strain ATCC BAA-935 / AF2122/97).